A 324-amino-acid polypeptide reads, in one-letter code: Pyruvate synthase subunit PorB (324 aa).

Residues cysteine 26, cysteine 29, and cysteine 57 each contribute to the [4Fe-4S] cluster site. The segment at 150–172 (TGNQRSGSTPPGSDTTTAPVGKK) is disordered. Residues 155–166 (SGSTPPGSDTTT) are compositionally biased toward low complexity. Residue cysteine 228 coordinates [4Fe-4S] cluster.

As to quaternary structure, heterotetramer of one alpha, one beta, one delta and one gamma chain. Requires [4Fe-4S] cluster as cofactor.

The catalysed reaction is 2 oxidized [2Fe-2S]-[ferredoxin] + pyruvate + CoA = 2 reduced [2Fe-2S]-[ferredoxin] + acetyl-CoA + CO2 + H(+). The protein is Pyruvate synthase subunit PorB (porB) of Thermotoga maritima (strain ATCC 43589 / DSM 3109 / JCM 10099 / NBRC 100826 / MSB8).